The chain runs to 667 residues: NADPH--cytochrome P450 reductase (667 aa).

The Lumenal segment spans residues 1–8 (MEILESID). The chain crosses the membrane as a helical span at residues 9–29 (FIEVLILDNLGAIIIVAVIVG). Topologically, residues 30–667 (TYLYMNKPPP…HGRYLQDVWF (638 aa)) are cytoplasmic. The Flavodoxin-like domain occupies 72–215 (MKIFFGTQTR…DFNRWKKDMW (144 aa)). FMN is bound by residues 164 to 173 (LGNKTYEHYN) and Asp199. Positions 277-511 (KNPYYAEVLE…FVRESHFKLP (235 aa)) constitute an FAD-binding FR-type domain. Arg297 is an NADP(+) binding site. FAD is bound by residues 468 to 470 (TSV) and 484 to 487 (GVAS). NADP(+)-binding positions include Thr527, 586-587 (SR), and 592-596 (KVYVQ). Trp666 is a binding site for FAD.

It belongs to the NADPH--cytochrome P450 reductase family. This sequence in the N-terminal section; belongs to the flavodoxin family. The protein in the C-terminal section; belongs to the flavoprotein pyridine nucleotide cytochrome reductase family. It depends on FAD as a cofactor. Requires FMN as cofactor.

It is found in the endoplasmic reticulum membrane. It catalyses the reaction 2 oxidized [cytochrome P450] + NADPH = 2 reduced [cytochrome P450] + NADP(+) + H(+). Its function is as follows. This enzyme is required for electron transfer from NADP to cytochrome P450 in microsomes. It can also provide electron transfer to heme oxygenase and cytochrome B5. In Dictyostelium discoideum (Social amoeba), this protein is NADPH--cytochrome P450 reductase (redB).